Consider the following 521-residue polypeptide: Melanopsin (521 aa).

Residues 1-71 lie on the Extracellular side of the membrane; sequence MDSPSGPRVL…VDVPDHAHYT (71 aa). Residues Asn-30 and Asn-34 are each glycosylated (N-linked (GlcNAc...) asparagine). Residues 72–92 traverse the membrane as a helical segment; it reads LGTVILLVGLTGMLGNLTVIY. The Cytoplasmic segment spans residues 93 to 106; that stretch reads TFCRNRGLRTPANM. Residues 107–127 form a helical membrane-spanning segment; the sequence is FIINLAVSDFLMSVTQAPVFF. At 128–143 the chain is on the extracellular side; sequence ASSLYKKWLFGETGCE. A disulfide bridge connects residues Cys-142 and Cys-220. Residues 144–164 traverse the membrane as a helical segment; sequence FYAFCGAVFGITSMITLTAIA. Residues 165–187 are Cytoplasmic-facing; the sequence is MDRYLVITRPLATIGRGSKRRTA. Residues 188–208 form a helical membrane-spanning segment; that stretch reads LVLLGVWLYALAWSLPPFFGW. The Extracellular segment spans residues 209–237; it reads SAYVPEGLLTSCSWDYMTFTPQVRAYTML. Residues 238 to 258 form a helical membrane-spanning segment; it reads LFCFVFFLPLLIIIFCYIFIF. Over 259–293 the chain is Cytoplasmic; sequence RAIRETGRACEGCGESPLRQRRQWQRLQSEWKMAK. Residues 294-314 form a helical membrane-spanning segment; the sequence is VALIVILLFVLSWAPYSTVAL. At 315-329 the chain is on the extracellular side; that stretch reads VAFAGYSHILTPYMS. A helical transmembrane segment spans residues 330-350; sequence SVPAVIAKASAIHNPIIYAIT. Residue Lys-337 is modified to N6-(retinylidene)lysine. Residues 351-521 lie on the Cytoplasmic side of the membrane; the sequence is HPKYRVAIAQ…LEDDVTLRHL (171 aa). Positions 445-486 are disordered; sequence GELKASSSPQVQRSKTPKVPGPSTCRPMKGQGARPSSLRGDQ. The span at 449–458 shows a compositional bias: polar residues; it reads ASSSPQVQRS.

It belongs to the G-protein coupled receptor 1 family. Opsin subfamily. In terms of tissue distribution, expressed in the retinal pigment epithelium and ganglion cell layer (at protein level). Also expressed in amacrine cell layers of the retina. Weakly expressed in vibrissae, and tail. As to expression, observed with processes in the outer strata of inner plexiform layer (IPL) close to the inner nuclear layer (INL) or is found to be bistratified with processes located both in the inner (ON) or outer (OFF) layers of the IPL (at protein level). A second population of isoform 1 is identified in processes which are confined to the inner layer of the IPL near to the ganglion cell layer (GCL) (at protein level). About 40 times more abundant than isoform 1 in the retina (at protein level). Isoform 2 is involved in processes localized to the outer IPL or is bistratified with processes in both the inner and outer layers of the IPL (at protein level). Isoform 2 is absent in the processes confined only to the inner layer of the IPL (at protein level).

It localises to the cell membrane. The protein localises to the cell projection. The protein resides in the axon. It is found in the dendrite. Its subcellular location is the perikaryon. Functionally, photoreceptor that binds cis-retinaldehydes. Contributes to pupillar reflex, photoentrainment and other non-image forming responses to light. May be involved in the optokinetic visual tracking response. May be involved in the regulation of retinal hyaloid vessel growth and regression. The chain is Melanopsin (Opn4) from Mus musculus (Mouse).